The sequence spans 213 residues: Thiamine-phosphate synthase (213 aa).

Residues 41–45 (QFRVK) and Asn73 each bind 4-amino-2-methyl-5-(diphosphooxymethyl)pyrimidine. Mg(2+)-binding residues include Asp74 and Asp93. Thr112 contacts 4-amino-2-methyl-5-(diphosphooxymethyl)pyrimidine. 139 to 141 (SAT) provides a ligand contact to 2-[(2R,5Z)-2-carboxy-4-methylthiazol-5(2H)-ylidene]ethyl phosphate. Lys142 is a binding site for 4-amino-2-methyl-5-(diphosphooxymethyl)pyrimidine. Residue Gly171 coordinates 2-[(2R,5Z)-2-carboxy-4-methylthiazol-5(2H)-ylidene]ethyl phosphate.

It belongs to the thiamine-phosphate synthase family. The cofactor is Mg(2+).

It catalyses the reaction 2-[(2R,5Z)-2-carboxy-4-methylthiazol-5(2H)-ylidene]ethyl phosphate + 4-amino-2-methyl-5-(diphosphooxymethyl)pyrimidine + 2 H(+) = thiamine phosphate + CO2 + diphosphate. The enzyme catalyses 2-(2-carboxy-4-methylthiazol-5-yl)ethyl phosphate + 4-amino-2-methyl-5-(diphosphooxymethyl)pyrimidine + 2 H(+) = thiamine phosphate + CO2 + diphosphate. It carries out the reaction 4-methyl-5-(2-phosphooxyethyl)-thiazole + 4-amino-2-methyl-5-(diphosphooxymethyl)pyrimidine + H(+) = thiamine phosphate + diphosphate. It functions in the pathway cofactor biosynthesis; thiamine diphosphate biosynthesis; thiamine phosphate from 4-amino-2-methyl-5-diphosphomethylpyrimidine and 4-methyl-5-(2-phosphoethyl)-thiazole: step 1/1. Functionally, condenses 4-methyl-5-(beta-hydroxyethyl)thiazole monophosphate (THZ-P) and 2-methyl-4-amino-5-hydroxymethyl pyrimidine pyrophosphate (HMP-PP) to form thiamine monophosphate (TMP). The polypeptide is Thiamine-phosphate synthase (Erythrobacter litoralis (strain HTCC2594)).